An 86-amino-acid chain; its full sequence is Small ribosomal subunit protein uS17 (86 aa).

The protein belongs to the universal ribosomal protein uS17 family. In terms of assembly, part of the 30S ribosomal subunit.

Its function is as follows. One of the primary rRNA binding proteins, it binds specifically to the 5'-end of 16S ribosomal RNA. This is Small ribosomal subunit protein uS17 from Roseiflexus sp. (strain RS-1).